Here is a 927-residue protein sequence, read N- to C-terminus: Sodium/calcium exchanger 3 (927 aa).

A signal peptide spans 1–30 (MAWLRLQPLTSAFLHFGLVTFVLFLNGLRA). Topologically, residues 31–73 (EAGDLRDVPSAGQNNESCSGSSDCKEGVILPIWYPENPSLGDK) are extracellular. N-linked (GlcNAc...) asparagine glycosylation is present at N45. Residues 74 to 94 (IARVIVYFVALIYMFLGVSII) form a helical membrane-spanning segment. At 95 to 147 (ADRFMASIEVITSQEREVTIKKPNGETSTTTIRVWNETVSNLTLMALGSSAPE) the chain is on the cytoplasmic side. An Alpha-1 repeat occupies 140–180 (ALGSSAPEILLSLIEVCGHGFIAGDLGPSTIVGSAAFNMFI). Residues 148-168 (ILLSLIEVCGHGFIAGDLGPS) traverse the membrane as a helical segment. T169 is a topological domain (extracellular). Residues 170 to 190 (IVGSAAFNMFIIIGICVYVIP) form a helical membrane-spanning segment. Over 191 to 202 (DGETRKIKHLRV) the chain is Cytoplasmic. Residues 203 to 223 (FFVTAAWSVFAYIWLYMILAV) traverse the membrane as a helical segment. At 224–230 (FSPGVVQ) the chain is on the extracellular side. The chain crosses the membrane as a helical span at residues 231 to 251 (VWEGLLTLFFFPVCVLLAWVA). Over 252 to 726 (DKRLLFYKYM…DESGEERLPS (475 aa)) the chain is Cytoplasmic. The putative calmodulin-binding region stretch occupies residues 253–272 (KRLLFYKYMHKRYRTDKHRG). 2 Calx-beta domains span residues 386–485 (VHTD…VRLS) and 519–619 (ATVT…IALG). The Ca(2+) site is built by E409, D445, D470, D471, I473, E475, E478, D525, D526, D527, E543, D579, E606, E607, and E672. The helical transmembrane segment at 727–747 (CFDYVMHFLTVFWKVLFACVP) threads the bilayer. At 748–754 (PTEYCHG) the chain is on the extracellular side. The helical transmembrane segment at 755-775 (WACFVVSILIIGMLTAIIGDL) threads the bilayer. The Cytoplasmic portion of the chain corresponds to 776–778 (ASH). The helical transmembrane segment at 779–799 (FGCTIGLKDSVTAVVFVAFGT) threads the bilayer. An Alpha-2 repeat occupies 796–832 (AFGTSVPDTFASKAAALQDVYADASIGNVTGSNAVNV). Residues 800–828 (SVPDTFASKAAALQDVYADASIGNVTGSN) are Extracellular-facing. Residue N823 is glycosylated (N-linked (GlcNAc...) asparagine). Residues 829-849 (AVNVFLGIGLAWSVAAIYWAM) traverse the membrane as a helical segment. Residues 850-860 (QGQEFHVSAGT) are Cytoplasmic-facing. Residues 861–881 (LAFSVTLFTIFAFVCLSVLLY) traverse the membrane as a helical segment. Topologically, residues 882 to 903 (RRRPHLGGELGGPRGCKLATTW) are extracellular. Residues 904–924 (LFVSLWLLYVLFATLEAYCYI) traverse the membrane as a helical segment. Residues 925-927 (KGF) lie on the Cytoplasmic side of the membrane.

The protein belongs to the Ca(2+):cation antiporter (CaCA) (TC 2.A.19) family. SLC8 subfamily. In terms of assembly, interacts with AKAP1. In terms of tissue distribution, detected in neurons in brain cortex and hippocampus. Detected in pyramidal cell bodies and processes, in granule cells and interneurons in the CA1 and CA3 region of the hippocampus. Detected on astrocyte processes in brain cortex. Detected on endothelial cells in hippocampus capillaries (at protein level). Restricted to brain and skeletal muscle.

It is found in the cell membrane. Its subcellular location is the perikaryon. The protein localises to the cell projection. It localises to the dendrite. The protein resides in the dendritic spine. It is found in the sarcolemma. Its subcellular location is the cytoplasm. The protein localises to the sarcoplasm. It localises to the cell junction. The protein resides in the mitochondrion outer membrane. It is found in the endoplasmic reticulum membrane. Its subcellular location is the perinuclear region. It carries out the reaction Ca(2+)(in) + 3 Na(+)(out) = Ca(2+)(out) + 3 Na(+)(in). With respect to regulation, calcium transport is down-regulated by Na(+) and stimulated by Ca(2+). Its function is as follows. Mediates the electrogenic exchange of Ca(2+) against Na(+) ions across the cell membrane, and thereby contributes to the regulation of cytoplasmic Ca(2+) levels and Ca(2+)-dependent cellular processes. Contributes to cellular Ca(2+) homeostasis in excitable cells, both in muscle and in brain. In a first phase, voltage-gated channels mediate the rapid increase of cytoplasmic Ca(2+) levels due to release of Ca(2+) stores from the endoplasmic reticulum. SLC8A3 mediates the export of Ca(2+) from the cell during the next phase, so that cytoplasmic Ca(2+) levels rapidly return to baseline. Contributes to Ca(2+) transport during excitation-contraction coupling in muscle. In neurons, contributes to the rapid decrease of cytoplasmic Ca(2+) levels back to baseline after neuronal activation, and thereby contributes to modulate synaptic plasticity, learning and memory. Required for normal oligodendrocyte differentiation and for normal myelination. Mediates Ca(2+) efflux from mitochondria and contributes to mitochondrial Ca(2+) ion homeostasis. The polypeptide is Sodium/calcium exchanger 3 (Slc8a3) (Rattus norvegicus (Rat)).